A 401-amino-acid polypeptide reads, in one-letter code: Elongation factor Tu 1 (401 aa).

The tr-type G domain maps to lysine 10–valine 209. Positions glycine 19–threonine 26 are G1. Glycine 19–threonine 26 serves as a coordination point for GTP. Threonine 26 lines the Mg(2+) pocket. Residues glycine 60–alanine 64 are G2. The segment at aspartate 81–glycine 84 is G3. GTP-binding positions include aspartate 81–histidine 85 and asparagine 136–aspartate 139. The segment at asparagine 136 to aspartate 139 is G4. Residues serine 174–leucine 176 form a G5 region.

The protein belongs to the TRAFAC class translation factor GTPase superfamily. Classic translation factor GTPase family. EF-Tu/EF-1A subfamily. Monomer.

It is found in the cytoplasm. The enzyme catalyses GTP + H2O = GDP + phosphate + H(+). GTP hydrolase that promotes the GTP-dependent binding of aminoacyl-tRNA to the A-site of ribosomes during protein biosynthesis. In Roseiflexus sp. (strain RS-1), this protein is Elongation factor Tu 1.